Reading from the N-terminus, the 69-residue chain is MAFLKKSLFLVLFLGLVSLSICDEEKRENEDEENQEDDEQSEMRRGLRSKIWLWVLLMIWQESNKFKKM.

A signal peptide spans 1–22 (MAFLKKSLFLVLFLGLVSLSIC). The propeptide occupies 23–45 (DEEKRENEDEENQEDDEQSEMRR). Residues 25 to 45 (EKRENEDEENQEDDEQSEMRR) are disordered. Residues 30 to 40 (EDEENQEDDEQ) show a composition bias toward acidic residues.

The protein belongs to the frog skin active peptide (FSAP) family. As to quaternary structure, monomer and/or weakly self-associated, oligomer, and amyloid-like fibril. Can adopt a monomeric nonamphipathic alpha-helical conformation, possibly with the aid of its cationic N- and C-termini, when bound to anionic membranes. Forms stable and ordered beta-sheet aggregates in aqueous environment or when bound to anionic or zwitterionic phospholipid vesicles. As to expression, expressed by the skin glands.

It localises to the secreted. It is found in the target cell membrane. In terms of biological role, atypical cationic antimicrobial peptide with potent activity against Gram-negative and Gram-positive bacteria. Acts by inducing permeabilization of bacterial membrane. In vitro, also shows chemoattractant activity, which is mediated through a G protein-coupled receptor (probably FPR2 coupled to the ERK1/2 MAPK kinase pathway). Has slow-kinetic self-association and amyloid-like properties that modulate its activity. The soluble, weakly self-associated forms act on leukocytes to promote chemotaxis but have low antibacterial activity, the oligomers exhibit potent antimicrobial activity, whereas the amyloid-like fibrils have a very weak antibacterial activity. The membrane composition has a great influence on the peptide behavior. The peptide induces membrane leakage and insertion to a lesser extent in model membranes of the anionic lipid phosphatidylglycerol (PG) than in the model membranes of the zwitterionic lipid phosphatidylcholine (PC) vesicles. It forms more fibrils in PC than in PG. Membrane perturbations are more observed in the presence of PG than in the presence of PC. The peptide shows low hemolytic activity. This Phyllomedusa sauvagei (Sauvage's leaf frog) protein is Atypical cationic antimicrobial peptide.